The primary structure comprises 130 residues: Small ribosomal subunit protein uS9 (130 aa).

Belongs to the universal ribosomal protein uS9 family.

The sequence is that of Small ribosomal subunit protein uS9 from Marinobacter nauticus (strain ATCC 700491 / DSM 11845 / VT8) (Marinobacter aquaeolei).